We begin with the raw amino-acid sequence, 160 residues long: Putative pre-16S rRNA nuclease (160 aa).

The protein belongs to the YqgF nuclease family.

The protein localises to the cytoplasm. Its function is as follows. Could be a nuclease involved in processing of the 5'-end of pre-16S rRNA. This Cereibacter sphaeroides (strain ATCC 17029 / ATH 2.4.9) (Rhodobacter sphaeroides) protein is Putative pre-16S rRNA nuclease.